A 337-amino-acid chain; its full sequence is Transaldolase (337 aa).

K115 carries the N6-acetyllysine modification. Catalysis depends on K142, which acts as the Schiff-base intermediate with substrate. K219 carries the post-translational modification N6-acetyllysine. A phosphoserine mark is found at S237 and S256. Residues K269, K286, and K321 each carry the N6-acetyllysine modification.

Belongs to the transaldolase family. Type 1 subfamily. As to quaternary structure, homodimer.

It localises to the cytoplasm. The catalysed reaction is D-sedoheptulose 7-phosphate + D-glyceraldehyde 3-phosphate = D-erythrose 4-phosphate + beta-D-fructose 6-phosphate. It participates in carbohydrate degradation; pentose phosphate pathway; D-glyceraldehyde 3-phosphate and beta-D-fructose 6-phosphate from D-ribose 5-phosphate and D-xylulose 5-phosphate (non-oxidative stage): step 2/3. Transaldolase is important for the balance of metabolites in the pentose-phosphate pathway. The chain is Transaldolase (TALDO1) from Bos taurus (Bovine).